The following is a 1729-amino-acid chain: 182 kDa tankyrase-1-binding protein (1729 aa).

Over residues 1 to 12 the composition is skewed to polar residues; sequence MKVSTLRESSAM. Residues 1–151 form a disordered region; that stretch reads MKVSTLRESS…VRKAPAPFRP (151 aa). Ser-14 carries the phosphoserine modification. Residues 46–63 are compositionally biased toward low complexity; it reads ALPAKPALPAKPSLLVPV. Residues 117 to 127 are compositionally biased toward basic and acidic residues; sequence TGKEEAGKEEP. Thr-131 is subject to Phosphothreonine. Residues Ser-178, Ser-221, and Ser-228 each carry the phosphoserine modification. Disordered regions lie at residues 184-450, 484-603, and 657-880; these read GSRL…LAAL, PSGL…ESPL, and ETTQ…SSRD. The tract at residues 210-1572 is acidic; it reads DEDGSTLFRG…TEILDSAMYR (1363 aa). The segment covering 230–245 has biased composition (basic and acidic residues); it reads AECREEHSKTPEERSL. Thr-239 carries the phosphothreonine modification. Ser-287 and Ser-301 each carry phosphoserine. The span at 352–363 shows a compositional bias: low complexity; it reads PSPGLPAEGAPE. Positions 364 to 374 are enriched in pro residues; sequence APRPSSPPPEV. Residues Ser-429, Ser-435, Ser-437, Ser-494, and Ser-498 each carry the phosphoserine modification. 3 stretches are compositionally biased toward low complexity: residues 500 to 512, 524 to 541, and 572 to 583; these read ITEA…AAEA, VSQQ…SGSS, and LPTTEGTPGLPL. Thr-501 is subject to Phosphothreonine. Phosphoserine occurs at positions 601, 672, 691, 695, 712, 724, 744, 762, and 806. Residues 738–753 show a composition bias toward polar residues; it reads PQPSSFSPSSWCQGAS. The span at 803–812 shows a compositional bias: polar residues; it reads ASSSQDQSKV. A Phosphothreonine modification is found at Thr-833. Residues Ser-836, Ser-851, Ser-872, Ser-877, Ser-882, and Ser-893 each carry the phosphoserine modification. Positions 858-872 are enriched in basic and acidic residues; that stretch reads RDAELQDQEFGKRDS. Phosphotyrosine is present on Tyr-897. The disordered stretch occupies residues 897 to 1083; sequence YASQDANEQG…ADLEDGEMGK (187 aa). 4 positions are modified to phosphoserine: Ser-899, Ser-920, Ser-936, and Ser-976. At Thr-979 the chain carries Phosphothreonine. A phosphoserine mark is found at Ser-983, Ser-987, Ser-1004, Ser-1008, Ser-1013, Ser-1024, Ser-1029, Ser-1054, Ser-1073, Ser-1091, Ser-1103, Ser-1133, Ser-1138, Ser-1158, Ser-1178, Ser-1248, and Ser-1253. Basic and acidic residues predominate over residues 1012-1021; sequence GSRDAGRPGE. The span at 1043-1054 shows a compositional bias: polar residues; that stretch reads RDQSSWQNSDAS. Residues 1240 to 1302 form a disordered region; the sequence is EVGEGGGHSQ…GAVCSPGESK (63 aa). Thr-1282 carries the post-translational modification Phosphothreonine. Phosphoserine is present on residues Ser-1297, Ser-1328, Ser-1331, Ser-1383, and Ser-1385. The segment at 1362-1561 is disordered; it reads AREHGVGGVS…SPSQDFSFIE (200 aa). A compositionally biased stretch (basic and acidic residues) spans 1389–1400; that stretch reads EARDPLEARELG. Over residues 1406 to 1419 the composition is skewed to polar residues; the sequence is GPETQGEDYSSSSL. Residues Ser-1435, Ser-1439, Ser-1450, Ser-1452, Ser-1473, Ser-1476, Ser-1503, and Ser-1506 each carry the phosphoserine modification. Residues 1450-1542 are tankyrase-binding; the sequence is SGSQGLLEEM…SDQGPAQTSR (93 aa). At Thr-1518 the chain carries Phosphothreonine. A phosphoserine mark is found at Ser-1533, Ser-1545, and Ser-1558. Thr-1563 is modified (phosphothreonine). The interval 1575-1729 is disordered; that stretch reads ANLGRKRGHR…QALKLKKKKV (155 aa). A compositionally biased stretch (basic residues) spans 1577-1586; it reads LGRKRGHRAP. The segment covering 1602–1615 has biased composition (basic and acidic residues); the sequence is SDAHLFQDSTEPRA. A phosphoserine mark is found at Ser-1620, Ser-1621, and Ser-1631. A Nuclear localization signal motif is present at residues 1629 to 1635; that stretch reads PQSRRTR. Lys-1644 carries the N6-methyllysine modification. Residues Ser-1652, Ser-1666, and Ser-1715 each carry the phosphoserine modification. The span at 1665-1679 shows a compositional bias: basic and acidic residues; that stretch reads RSAEEGELAESKSSQ. The Nuclear localization signal signature appears at 1723 to 1729; the sequence is KLKKKKV.

In terms of assembly, binds to the ANK repeat domain of TNKS1 and TNKS2. ADP-ribosylated by TNKS1 (in vitro). As to expression, detected in testis, ovary, lung, skeletal muscle, heart, prostate and pancreas, and at very low levels in brain and peripheral blood leukocytes.

Its subcellular location is the nucleus. It is found in the cytoplasm. The protein resides in the cytoskeleton. The protein localises to the chromosome. This is 182 kDa tankyrase-1-binding protein (TNKS1BP1) from Homo sapiens (Human).